The chain runs to 153 residues: Insulin-like growth factor 1.S (153 aa).

Cystine bridges form between cysteine 29-cysteine 38, cysteine 54-cysteine 96, cysteine 66-cysteine 109, and cysteine 100-cysteine 109. Residues 49-77 (GPETLCGAELVDTLQFVCGDRGFYFSKPT) form a b region. The c stretch occupies residues 78–89 (GYGSNNRRSHHR). The segment at 90-110 (GIVDECCFQSCDFRRLEMYCA) is a. Residues 111–118 (PAKQAKSA) are d. The propeptide at 119-153 (RSVRTQRHTDMPKAQKEVHPKNTSRGNTGSRGFRM) is e peptide. The tract at residues 119-153 (RSVRTQRHTDMPKAQKEVHPKNTSRGNTGSRGFRM) is disordered. Positions 125-138 (RHTDMPKAQKEVHP) are enriched in basic and acidic residues. Polar residues predominate over residues 139–153 (KNTSRGNTGSRGFRM).

It belongs to the insulin family. As to expression, expressed in adult liver, lung, heart, kidney and peritoneal fat.

The protein localises to the secreted. The insulin-like growth factors, isolated from plasma, are structurally and functionally related to insulin but have a much higher growth-promoting activity. Promotes head development by inhibiting Wnt signaling during embryogenesis. Acts as a ligand for IGF1R. Binds to the alpha subunit of IGF1R, leading to the activation of the intrinsic tyrosine kinase activity which autophosphorylates tyrosine residues in the beta subunit thus initiatiating a cascade of down-stream signaling events leading to activation of the PI3K-AKT/PKB and the Ras-MAPK pathways. Binds to integrins. Its binding to integrins and subsequent ternary complex formation with integrins and IGFR1 are essential for IGF1 signaling. The protein is Insulin-like growth factor 1.S of Xenopus laevis (African clawed frog).